Reading from the N-terminus, the 903-residue chain is Calcium-activated chloride channel regulator 1 (903 aa).

A signal peptide spans 1–21; that stretch reads MVPRLTVILFLTLHLLPGMKS. The interval 45–199 is metalloprotease domain; sequence DEKLIQNIKE…HITGTNVIVK (155 aa). Residue histidine 155 participates in Zn(2+) binding. Residue glutamate 156 is part of the active site. Residues histidine 159 and aspartate 166 each coordinate Zn(2+). The VWFA domain maps to 308–476; it reads VVCLVLDKSG…NGLTNAFSRI (169 aa). N-linked (GlcNAc...) asparagine glycans are attached at residues asparagine 360, asparagine 372, asparagine 504, and asparagine 842. A helical membrane pass occupies residues 883-903; it reads GTKISAINLAIFALAMILSIV.

Belongs to the CLCR family. In terms of processing, glycosylated. The 125-kDa product is autoproteolytically processed by the metalloprotease domain and yields to two cell-surface-associated subunits, a 90-kDa protein and a group of 37- to 41-kDa proteins. The cleavage is necessary for calcium-activated chloride channel (CaCC) activation activity. As to expression, trachea.

It localises to the apical cell membrane. In terms of biological role, may be involved in mediating calcium-activated chloride conductance. May play critical roles in goblet cell metaplasia, mucus hypersecretion, cystic fibrosis and AHR. May be involved in the regulation of mucus production and/or secretion by goblet cells. Involved in the regulation of tissue inflammation in the innate immune response. May play a role as a tumor suppressor. Induces MUC5AC. The sequence is that of Calcium-activated chloride channel regulator 1 from Bos taurus (Bovine).